Consider the following 834-residue polypeptide: DIS3-like exonuclease 2 (834 aa).

Polar residues predominate over residues 1 to 23; that stretch reads MHNSEFLSPVQSGTQRGTNRSIL. Residues 1 to 35 form a disordered region; the sequence is MHNSEFLSPVQSGTQRGTNRSILNNKKSGKGKKKS. Mg(2+) contacts are provided by aspartate 354 and aspartate 363.

It belongs to the RNR ribonuclease family. DIS3L2 subfamily. The cofactor is Mg(2+). It depends on Mn(2+) as a cofactor.

The protein resides in the cytoplasm. It is found in the P-body. In terms of biological role, 3'-5'-exoribonuclease that specifically recognizes RNAs polyuridylated at their 3' end and mediates their degradation. Component of an exosome-independent RNA degradation pathway that mediates degradation of both mRNAs and miRNAs that have been polyuridylated by a terminal uridylyltransferase. Essential for correct mitosis, and negatively regulates cell proliferation. The protein is DIS3-like exonuclease 2 of Xenopus tropicalis (Western clawed frog).